The sequence spans 969 residues: Translation initiation factor IF-2 (969 aa).

The interval 96–377 (KRDPAEPVRA…NSRNQHQDRR (282 aa)) is disordered. Low complexity-rich tracts occupy residues 105–157 (AEPA…QAEP), 167–181 (AAPAQAVAEPVEPAK), and 216–252 (PSAPAESPKSAKAEPAAAPKTTAKPGEIRRAAAPAAP). Residues 253–264 (DRAREEARRAAE) show a composition bias toward basic and acidic residues. Over residues 357 to 366 (RAGGKGGRGG) the composition is skewed to gly residues. The 168-residue stretch at 470-637 (PRAPVVTVMG…NVLLQAEILE (168 aa)) folds into the tr-type G domain. The tract at residues 479 to 486 (GHVDHGKT) is G1. Residue 479 to 486 (GHVDHGKT) coordinates GTP. The segment at 504–508 (GITQH) is G2. Residues 525 to 528 (DTPG) form a G3 region. Residues 525 to 529 (DTPGH) and 579 to 582 (NKID) contribute to the GTP site. Residues 579 to 582 (NKID) form a G4 region. The interval 615–617 (SAK) is G5.

This sequence belongs to the TRAFAC class translation factor GTPase superfamily. Classic translation factor GTPase family. IF-2 subfamily.

Its subcellular location is the cytoplasm. One of the essential components for the initiation of protein synthesis. Protects formylmethionyl-tRNA from spontaneous hydrolysis and promotes its binding to the 30S ribosomal subunits. Also involved in the hydrolysis of GTP during the formation of the 70S ribosomal complex. The sequence is that of Translation initiation factor IF-2 from Bordetella parapertussis (strain 12822 / ATCC BAA-587 / NCTC 13253).